The chain runs to 460 residues: UDP-N-acetylmuramoylalanine--D-glutamate ligase (460 aa).

120 to 126 contacts ATP; sequence GSNGKTT.

Belongs to the MurCDEF family.

Its subcellular location is the cytoplasm. It carries out the reaction UDP-N-acetyl-alpha-D-muramoyl-L-alanine + D-glutamate + ATP = UDP-N-acetyl-alpha-D-muramoyl-L-alanyl-D-glutamate + ADP + phosphate + H(+). The protein operates within cell wall biogenesis; peptidoglycan biosynthesis. In terms of biological role, cell wall formation. Catalyzes the addition of glutamate to the nucleotide precursor UDP-N-acetylmuramoyl-L-alanine (UMA). This chain is UDP-N-acetylmuramoylalanine--D-glutamate ligase, found in Lactobacillus delbrueckii subsp. bulgaricus (strain ATCC BAA-365 / Lb-18).